Reading from the N-terminus, the 120-residue chain is Peptidyl-tRNA hydrolase (120 aa).

This sequence belongs to the PTH2 family.

It localises to the cytoplasm. The catalysed reaction is an N-acyl-L-alpha-aminoacyl-tRNA + H2O = an N-acyl-L-amino acid + a tRNA + H(+). Functionally, the natural substrate for this enzyme may be peptidyl-tRNAs which drop off the ribosome during protein synthesis. This is Peptidyl-tRNA hydrolase from Pyrobaculum aerophilum (strain ATCC 51768 / DSM 7523 / JCM 9630 / CIP 104966 / NBRC 100827 / IM2).